A 158-amino-acid chain; its full sequence is Protein GLUTAMINE DUMPER 1 (158 aa).

Topologically, residues 1-36 are extracellular; that stretch reads MRPLSVQSKFEDVATSTSVNHHGVTPQSPWHSPVPY. Residues 37-57 form a helical membrane-spanning segment; sequence LFGGLAAMLGLIAFALLILAC. Residues 58–158 lie on the Cytoplasmic side of the membrane; it reads SYWRLSSSGE…DTGETTTTSH (101 aa). The tract at residues 65 to 85 is disordered; sequence SGEEDGQNVDEEKESRSGDKA. The segment covering 66 to 76 has biased composition (acidic residues); that stretch reads GEEDGQNVDEE. A VIMAG motif is present at residues 96-100; it reads VIMAG. The tract at residues 126–158 is disordered; that stretch reads ISQEESVAKEEEKMREGEEEKVKDTGETTTTSH. Basic and acidic residues predominate over residues 131 to 151; the sequence is SVAKEEEKMREGEEEKVKDTG.

It belongs to the GLUTAMINE DUMPER 1 (TC 9.B.60) family. As to quaternary structure, interacts with LOG2. Ubiquitinated by LOG2 (in vitro). Expressed in the vascular tissues and in hydathodes. Expressed in the phloem and xylem (at the protein level).

The protein resides in the cell membrane. Its function is as follows. Probable subunit of an amino acid transporter involved in the regulation of the amino acid metabolism. Stimulates amino acid export by activating nonselective amino acid facilitators. Required the interaction with the RING-type E3 ubiquitin-protein ligase LOG2 to fulfill its function. Plays a role in the Gln export at hydathodes, at xylem parenchyma into xylem sap and from mesophyll into leaf apoplasm. Acts upstream genes involved in the salicylic acid (SA) pathway and in the geminivirus-host interaction. In Arabidopsis thaliana (Mouse-ear cress), this protein is Protein GLUTAMINE DUMPER 1 (GDU1).